A 483-amino-acid polypeptide reads, in one-letter code: Aspartyl/glutamyl-tRNA(Asn/Gln) amidotransferase subunit B (483 aa).

Belongs to the GatB/GatE family. GatB subfamily. In terms of assembly, heterotrimer of A, B and C subunits.

The enzyme catalyses L-glutamyl-tRNA(Gln) + L-glutamine + ATP + H2O = L-glutaminyl-tRNA(Gln) + L-glutamate + ADP + phosphate + H(+). The catalysed reaction is L-aspartyl-tRNA(Asn) + L-glutamine + ATP + H2O = L-asparaginyl-tRNA(Asn) + L-glutamate + ADP + phosphate + 2 H(+). Allows the formation of correctly charged Asn-tRNA(Asn) or Gln-tRNA(Gln) through the transamidation of misacylated Asp-tRNA(Asn) or Glu-tRNA(Gln) in organisms which lack either or both of asparaginyl-tRNA or glutaminyl-tRNA synthetases. The reaction takes place in the presence of glutamine and ATP through an activated phospho-Asp-tRNA(Asn) or phospho-Glu-tRNA(Gln). The chain is Aspartyl/glutamyl-tRNA(Asn/Gln) amidotransferase subunit B from Rickettsia rickettsii (strain Sheila Smith).